We begin with the raw amino-acid sequence, 352 residues long: Rhodopsin (352 aa).

Topologically, residues 1-36 (MNGTEGPDFYIPFSNKTGVVRSPFEYPQYYLAEPWK) are extracellular. Asparagine 2 and asparagine 15 each carry an N-linked (GlcNAc...) asparagine glycan. Residues 37–61 (YSALAAYMFMLIILGFPINFLTLYV) form a helical membrane-spanning segment. Residues 62-73 (TVQHKKLRSPLN) are Cytoplasmic-facing. The helical transmembrane segment at 74–96 (YILLNLAVADLFMVLGGFTTTLY) threads the bilayer. The Extracellular portion of the chain corresponds to 97–110 (TSMNGYFVFGVTGC). Cysteines 110 and 187 form a disulfide. A helical transmembrane segment spans residues 111–133 (YFEGFFATLGGEVALWCLVVLAI). The 'Ionic lock' involved in activated form stabilization signature appears at 134 to 136 (ERY). Residues 134-152 (ERYIVVCKPMSNFRFGENH) are Cytoplasmic-facing. The chain crosses the membrane as a helical span at residues 153-173 (AIMGVVFTWIMALTCAAPPLV). Topologically, residues 174–202 (GWSRYIPEGMQCSCGVDYYTLKPEVNNES) are extracellular. A helical membrane pass occupies residues 203-224 (FVIYMFVVHFAIPLAVIFFCYG). The Cytoplasmic segment spans residues 225–252 (RLVCTVKEAAAQQQESATTQKAEKEVTR). The chain crosses the membrane as a helical span at residues 253–274 (MVIIMVVSFLICWVPYASVAFY). Over 275 to 286 (IFSNQGSDFGPV) the chain is Extracellular. Residues 287-308 (FMTIPAFFAKSSAIYNPVIYIV) traverse the membrane as a helical segment. N6-(retinylidene)lysine is present on lysine 296. The Cytoplasmic portion of the chain corresponds to 309–352 (MNKQFRNCMITTLCCGKNPLGDDETATGSKTETSSVSTSQVSPA). 2 S-palmitoyl cysteine lipidation sites follow: cysteine 322 and cysteine 323. The segment at 332-352 (ETATGSKTETSSVSTSQVSPA) is disordered. The segment covering 335–352 (TGSKTETSSVSTSQVSPA) has biased composition (low complexity).

The protein belongs to the G-protein coupled receptor 1 family. Opsin subfamily. In terms of processing, contains one covalently linked retinal chromophore. Upon light absorption, the covalently bound 11-cis-retinal is converted to all-trans-retinal. After hydrolysis of the Schiff base and release of the covalently bound all-trans-retinal, active rhodopsin is regenerated by binding of a fresh molecule of 11-cis-retinal. Expressed in rod-shaped photoreceptor cells in the retina that mediate vision in dim ligh (at protein level).

It localises to the membrane. The protein resides in the cell projection. Its subcellular location is the cilium. It is found in the photoreceptor outer segment. Its function is as follows. Photoreceptor required for image-forming vision at low light intensity. Required for photoreceptor cell viability after birth. Light-induced isomerization of 11-cis to all-trans retinal triggers a conformational change that activates signaling via G-proteins. Subsequent receptor phosphorylation mediates displacement of the bound G-protein alpha subunit by arrestin and terminates signaling. The sequence is that of Rhodopsin (RHO) from Alligator mississippiensis (American alligator).